A 482-amino-acid chain; its full sequence is Probable metalloreductase AIM14 (482 aa).

The next 7 membrane-spanning stretches (helical) occupy residues 16–36, 50–70, 87–106, 123–143, 155–175, 182–202, and 205–225; these read VKYG…VATV, SLPW…LGVW, GRMA…KYWP, IIVV…FVEG, LLGV…VALF, LFYV…LFHA, and PVTL…FIKF. A Ferric oxidoreductase domain is found at 86–198; sequence FGRMAYCLLP…ITIGMFVVLI (113 aa). Positions 225 to 348 constitute an FAD-binding FR-type domain; that stretch reads FQTYSATPVS…GGSGISLAIP (124 aa).

This sequence belongs to the ferric reductase (FRE) family. AIM14 subfamily.

Its subcellular location is the membrane. Functionally, probable cell surface metalloreductase. May be involved in iron or copper homeostasis. The polypeptide is Probable metalloreductase AIM14 (AIM14) (Meyerozyma guilliermondii (strain ATCC 6260 / CBS 566 / DSM 6381 / JCM 1539 / NBRC 10279 / NRRL Y-324) (Yeast)).